The chain runs to 1507 residues: Protein similar (1507 aa).

The segment at Met-1–Arg-85 is disordered. The segment covering Ser-26–Ser-49 has biased composition (low complexity). Residues Lys-72 to Arg-85 show a composition bias toward basic and acidic residues. One can recognise a bHLH domain in the interval Lys-72–Arg-125. 2 PAS domains span residues Asn-167–Lys-240 and Pro-307–Gly-377. The PAC domain maps to Thr-381–Leu-422. Disordered regions lie at residues Gln-433–Asp-459, His-541–Thr-588, Thr-706–Asn-832, and Tyr-900–Val-951. Positions Glu-439–Asp-459 are enriched in basic and acidic residues. Residues Ile-548–Gly-559 show a composition bias toward polar residues. Pro residues predominate over residues Ser-578 to Thr-588. The segment at Thr-692 to Glu-863 is ODD. The segment covering Thr-706–Gln-717 has biased composition (polar residues). Composition is skewed to low complexity over residues Ser-718 to Leu-745 and Ser-754 to His-777. Positions Asp-803 to Lys-818 are enriched in polar residues. Low complexity-rich tracts occupy residues Ser-823–Asn-832, Gln-907–Gln-918, and Ser-926–Val-951. Positions Lys-880–Gln-908 form a coiled coil. Coiled coils occupy residues Ala-982–Gln-1054 and Gln-1110–Gln-1162. 3 disordered regions span residues Pro-1204–Lys-1228, Lys-1251–Ser-1287, and Phe-1356–Ile-1460. Positions Ser-1413–Glu-1423 are enriched in polar residues.

Efficient DNA binding requires dimerization with another bHLH protein. Interacts with Vhl. In terms of tissue distribution, ubiquitously expressed in the embryo.

The protein localises to the cytoplasm. The protein resides in the nucleus. In terms of biological role, functions as a transcriptional regulator of the adaptive response to hypoxia. Binds to core DNA sequence 5'-[AG]CGTG-3' within the hypoxia response element (HRE) of target gene promoters. The polypeptide is Protein similar (sima) (Drosophila melanogaster (Fruit fly)).